A 284-amino-acid chain; its full sequence is Polyamine aminopropyltransferase (284 aa).

One can recognise a PABS domain in the interval 2–237; that stretch reads ELWYTEKHTE…GHWLFGFASK (236 aa). Gln31 provides a ligand contact to S-methyl-5'-thioadenosine. Spermidine contacts are provided by His62 and Asp86. S-methyl-5'-thioadenosine contacts are provided by residues Glu106 and 137–138; that span reads DG. Asp155 (proton acceptor) is an active-site residue. 155-158 provides a ligand contact to spermidine; it reads DSTD. Pro162 contacts S-methyl-5'-thioadenosine.

The protein belongs to the spermidine/spermine synthase family. As to quaternary structure, homodimer or homotetramer.

Its subcellular location is the cytoplasm. The catalysed reaction is S-adenosyl 3-(methylsulfanyl)propylamine + putrescine = S-methyl-5'-thioadenosine + spermidine + H(+). It functions in the pathway amine and polyamine biosynthesis; spermidine biosynthesis; spermidine from putrescine: step 1/1. Functionally, catalyzes the irreversible transfer of a propylamine group from the amino donor S-adenosylmethioninamine (decarboxy-AdoMet) to putrescine (1,4-diaminobutane) to yield spermidine. This chain is Polyamine aminopropyltransferase, found in Clostridium botulinum (strain Eklund 17B / Type B).